A 498-amino-acid polypeptide reads, in one-letter code: 3-octaprenyl-4-hydroxybenzoate carboxy-lyase (498 aa).

Mn(2+) is bound at residue Asn175. Residues 178-180 (IYR), 192-194 (RWL), and 197-198 (RG) each bind prenylated FMN. Residue Glu241 coordinates Mn(2+). The active-site Proton donor is Asp290.

The protein belongs to the UbiD family. Homohexamer. Requires prenylated FMN as cofactor. Mn(2+) is required as a cofactor.

The protein resides in the cell membrane. The catalysed reaction is a 4-hydroxy-3-(all-trans-polyprenyl)benzoate + H(+) = a 2-(all-trans-polyprenyl)phenol + CO2. It participates in cofactor biosynthesis; ubiquinone biosynthesis. In terms of biological role, catalyzes the decarboxylation of 3-octaprenyl-4-hydroxy benzoate to 2-octaprenylphenol, an intermediate step in ubiquinone biosynthesis. The chain is 3-octaprenyl-4-hydroxybenzoate carboxy-lyase from Yersinia pseudotuberculosis serotype I (strain IP32953).